We begin with the raw amino-acid sequence, 82 residues long: Defensin-like protein 208 (82 aa).

The signal sequence occupies residues 1-29 (MAKNLNTVSFTVLLLVLLMASTGILETEA). 3 disulfide bridges follow: C38–C63, C50–C76, and C54–C78.

This sequence belongs to the DEFL family.

It is found in the secreted. In Arabidopsis thaliana (Mouse-ear cress), this protein is Defensin-like protein 208.